A 301-amino-acid chain; its full sequence is Ornithine carbamoyltransferase (301 aa).

Residues Arg-100 and 127–130 (HPCQ) each bind carbamoyl phosphate. Residues Asn-158, Asp-221, and 225–226 (SM) each bind L-ornithine. Residues Cys-260 and Arg-288 each contribute to the carbamoyl phosphate site.

The protein belongs to the aspartate/ornithine carbamoyltransferase superfamily. OTCase family. As to quaternary structure, the enzyme is present as a mixture of trimers and dodecamers, with the relative proportions of the two forms depending on the salt concentration. In addition, the trimeric fraction could reassociate into dodecamers when the salt concentration is increased. It appears that in vivo, the main fraction is in the dodecameric form.

It localises to the cytoplasm. The enzyme catalyses carbamoyl phosphate + L-ornithine = L-citrulline + phosphate + H(+). The protein operates within amino-acid biosynthesis; L-arginine biosynthesis; L-arginine from L-ornithine and carbamoyl phosphate: step 1/3. Inhibited by excess of arginine and by the bisubstrate delta-N-phosphonoacetyl-L-ornithine (PALO). In terms of biological role, reversibly catalyzes the transfer of the carbamoyl group from carbamoyl phosphate (CP) to the N(epsilon) atom of ornithine (ORN) to produce L-citrulline, which is a substrate for argininosuccinate synthetase, the enzyme involved in the final step in arginine biosynthesis. The chain is Ornithine carbamoyltransferase from Moritella abyssi.